The sequence spans 478 residues: UDP-N-acetylmuramate--L-alanine ligase (478 aa).

120–126 (GSHGKTT) lines the ATP pocket.

Belongs to the MurCDEF family.

It is found in the cytoplasm. The catalysed reaction is UDP-N-acetyl-alpha-D-muramate + L-alanine + ATP = UDP-N-acetyl-alpha-D-muramoyl-L-alanine + ADP + phosphate + H(+). It functions in the pathway cell wall biogenesis; peptidoglycan biosynthesis. Functionally, cell wall formation. The polypeptide is UDP-N-acetylmuramate--L-alanine ligase (Rickettsia bellii (strain OSU 85-389)).